The following is a 54-amino-acid chain: uncharacterized protein (54 aa).

This is an uncharacterized protein from Dictyostelium discoideum (Social amoeba).